A 1268-amino-acid polypeptide reads, in one-letter code: Truncated polyprotein 1aTF (1268 aa).

The segment at 8–28 (CMCTPAARVFWNAGQVFCTRC) adopts a C4-type; atypical zinc-finger fold. The Peptidase C31 domain occupies 69–180 (ECTPSGCCWL…QPFCPFEEAH (112 aa)). Residues 69 to 182 (ECTPSGCCWL…FCPFEEAHSD (114 aa)) are PCP1-alpha. Residues Cys-76 and His-146 each act as for Nsp1-alpha papain-like cysteine proteinase activity in the active site. The PCP1-beta stretch occupies residues 269 to 384 (PNVFDGKCWL…IFRFGAHKWY (116 aa)). The Peptidase C32 domain maps to 269–385 (PNVFDGKCWL…FRFGAHKWYG (117 aa)). Active-site for Nsp1-beta papain-like cysteine proteinase activity residues include Cys-276 and His-345. A Peptidase C33 domain is found at 420–527 (TYSPPTDGSC…VGVCSEGCVA (108 aa)). Catalysis depends on for Nsp2 cysteine proteinase activity residues Cys-429 and His-498. Disordered regions lie at residues 728-758 (AIGSAQSSSDSKRENMHNSREDEPLDLSHPA) and 1027-1064 (SVTPPPKSAGLVLDQTVPPPTDIQQEDATPSDGLSHAS). The segment covering 737-749 (DSKRENMHNSRED) has biased composition (basic and acidic residues). Transmembrane regions (helical) follow at residues 1119-1139 (LWLQAIGCLQVLFYLLSCSVV), 1153-1173 (FLVLCGVFVWVFLVLGWLLLY), 1194-1214 (VMLSFWLLSSANFGNLCAALW), and 1233-1253 (VISGMLSYVYACLQIWPFLLF).

It is found in the host nucleus. The protein resides in the host cytoplasm. Its subcellular location is the host endoplasmic reticulum membrane. The protein localises to the membrane. Its function is as follows. Is essential for viral subgenomic mRNA synthesis. In terms of biological role, inhibits IFN-beta production. Counteracts the action of NF-kappaB by decreasing the phosphorylation of IkappaB-alpha, such that the degradation of IkappaB-alpha is suppressed. This leads to the blockage of NF-kappaB nuclear translocation and thus interference of NF-kappaB activation. Also seems to inhibit IRF3-dependent pathways. Nsp1-beta transactivates the programmed ribosomal frameshifting event leading to the expression of the 1aTF polyprotein. The protein is Truncated polyprotein 1aTF of Porcine reproductive and respiratory syndrome virus (isolate Pig/United States/SD 01-08/2001) (PRRSV).